The primary structure comprises 189 residues: Molybdenum cofactor guanylyltransferase (189 aa).

GTP contacts are provided by residues 12–14, Lys24, Asp68, and Asp94; that span reads LAG. Asp94 is a Mg(2+) binding site.

The protein belongs to the MobA family. Monomer. The cofactor is Mg(2+).

The protein localises to the cytoplasm. The catalysed reaction is Mo-molybdopterin + GTP + H(+) = Mo-molybdopterin guanine dinucleotide + diphosphate. Transfers a GMP moiety from GTP to Mo-molybdopterin (Mo-MPT) cofactor (Moco or molybdenum cofactor) to form Mo-molybdopterin guanine dinucleotide (Mo-MGD) cofactor. The protein is Molybdenum cofactor guanylyltransferase of Xanthomonas euvesicatoria pv. vesicatoria (strain 85-10) (Xanthomonas campestris pv. vesicatoria).